We begin with the raw amino-acid sequence, 130 residues long: Prefoldin subunit alpha (130 aa).

Belongs to the prefoldin subunit alpha family. Heterohexamer of two alpha and four beta subunits.

The protein localises to the cytoplasm. Molecular chaperone capable of stabilizing a range of proteins. Seems to fulfill an ATP-independent, HSP70-like function in archaeal de novo protein folding. This Thermoplasma acidophilum (strain ATCC 25905 / DSM 1728 / JCM 9062 / NBRC 15155 / AMRC-C165) protein is Prefoldin subunit alpha (pfdA).